A 92-amino-acid polypeptide reads, in one-letter code: Small ribosomal subunit protein uS19 (92 aa).

This sequence belongs to the universal ribosomal protein uS19 family.

Its function is as follows. Protein S19 forms a complex with S13 that binds strongly to the 16S ribosomal RNA. This chain is Small ribosomal subunit protein uS19, found in Rippkaea orientalis (strain PCC 8801 / RF-1) (Cyanothece sp. (strain PCC 8801)).